Reading from the N-terminus, the 918-residue chain is Chaperone protein ClpC1, chloroplastic (918 aa).

The Clp R domain maps to 88 to 230; it reads FERFTEKAIK…RTQVIRMVGE (143 aa). Repeat regions lie at residues 91-156 and 166-230; these read FTEK…IGRG and FTPR…MVGE. The interval 251-498 is i; that stretch reads LEEYGTNLTK…RVRLRHAQLP (248 aa). Residue 296-303 coordinates ATP; that stretch reads GEPGVGKT. Residues 505 to 540 enclose the UVR domain; the sequence is DKELRQVTKDKNEAVRGQDFEKAGELRDREMELKAQ. The segment at 565 to 756 is II; that stretch reads VTEADIQHIV…LLIMTSNVGS (192 aa). 639–646 lines the ATP pocket; sequence GPTGVGKS.

Belongs to the ClpA/ClpB family. ClpC subfamily. Widely expressed.

The protein resides in the plastid. Its subcellular location is the chloroplast. In terms of biological role, molecular chaperone that may interact with a ClpP-like protease involved in degradation of denatured proteins in the chloroplast. This is Chaperone protein ClpC1, chloroplastic (CLPC1) from Oryza sativa subsp. japonica (Rice).